Here is a 1292-residue protein sequence, read N- to C-terminus: HMG domain-containing protein 3 (1292 aa).

A DNA-binding region (HMG box) is located at residues 42–110 (TKKPRSAYLL…GLDPNSKLSA (69 aa)). 3 disordered regions span residues 363-391 (SKGSVVKRNQQPVTTEQNSSKENASKLTL), 448-505 (VQPE…GRAR), and 562-588 (KQLGQPIQQPSGPGEVKLPSGPSNRTS). Polar residues predominate over residues 370 to 391 (RNQQPVTTEQNSSKENASKLTL). Residues 467-478 (PTPSEGTSTSSP) are compositionally biased toward low complexity. The segment covering 562–572 (KQLGQPIQQPS) has biased composition (polar residues).

Its subcellular location is the nucleus. The chain is HMG domain-containing protein 3 from Homo sapiens (Human).